Reading from the N-terminus, the 246-residue chain is Salivary antigen SP32 (246 aa).

The first 23 residues, 1–23, serve as a signal peptide directing secretion; that stretch reads MSGHILTVGLIVVVAHCATLSSS. Residues 51–160 form a disordered region; the sequence is DKFYPDISDD…PDLSKYKNSP (110 aa). Over residues 65 to 78 the composition is skewed to basic and acidic residues; sequence VVRDNGRKGGDRGR. Positions 79-124 are enriched in polar residues; the sequence is QSTPSGKESHPSATQTGGRRPSQSPCGESRPSGSATSGRRPSQSPR. The span at 141–155 shows a compositional bias: basic and acidic residues; the sequence is QQDRRQNKKQPDLSK.

In terms of assembly, interacts with human DSG1. Interacts with human DSG3. In terms of tissue distribution, salivary gland (at protein level).

The protein localises to the secreted. Down-regulates the expression of CD86 and HLA-DR on the surface of lipopolysaccharide (LPS)-stimulated human peripheral blood mononuclear cells (PBMCs). Reduces LPS-induced secretion of IL-1beta/IL1B in human PBMCs. Reduces LPS-induced secretion of various cytokines, such as IL-1beta, TNF-alpha/TNF, MCP-1/CCL2, IL6, IL27 and IL-1alpha/IL1A, in host cultured macrophages probably via inhibition of NF-kappa-B signaling pathway. Reduces production of IFN-gamma/IFNG, IL4 and IL6 in human lymphocytes activated with PMA/ionomycin. Exhibits anti-inflammatory activity in carrageenan-induced paw edema model in rats. In Phlebotomus papatasi (Sandfly), this protein is Salivary antigen SP32.